The following is a 323-amino-acid chain: Transcription factor MYB108 (323 aa).

HTH myb-type domains lie at Glu-16–Leu-68 and Arg-69–Ala-123. 2 consecutive DNA-binding regions (H-T-H motif) follow at residues Trp-44 to Leu-68 and Trp-96 to Val-119.

In terms of assembly, interacts with BOI, but not with BRG1. Ubiquitinated in vitro by BOI. Expressed specifically in flowers. Restricted to anthers in maturing flowers. Strongest expression in the vascular and connective tissue where the anther attaches to the filament. Not detected in pollen.

Its subcellular location is the nucleus. Transcription factor contributing to the regulation of stamen maturation and male fertility in response to jasmonate signaling. Required for correct timing of anther dehiscence. Acts as a negative regulator of abscisic acid-induced cell death. Not involved in the regulation of BOI. Regulated by MYB21 and at a lower level by MYB24. Negatively regulated by the proteasome in an SCF(COI1) E3 ubiquitin-protein ligase complex-dependent manner. The sequence is that of Transcription factor MYB108 (MYB108) from Arabidopsis thaliana (Mouse-ear cress).